Consider the following 59-residue polypeptide: Large ribosomal subunit protein uL30 (59 aa).

It belongs to the universal ribosomal protein uL30 family. As to quaternary structure, part of the 50S ribosomal subunit.

The sequence is that of Large ribosomal subunit protein uL30 from Histophilus somni (strain 129Pt) (Haemophilus somnus).